A 130-amino-acid polypeptide reads, in one-letter code: Small ribosomal subunit protein uS11 (130 aa).

Belongs to the universal ribosomal protein uS11 family. In terms of assembly, part of the 30S ribosomal subunit. Interacts with proteins S7 and S18. Binds to IF-3.

Located on the platform of the 30S subunit, it bridges several disparate RNA helices of the 16S rRNA. Forms part of the Shine-Dalgarno cleft in the 70S ribosome. This is Small ribosomal subunit protein uS11 from Xanthomonas campestris pv. campestris (strain B100).